The sequence spans 147 residues: Bis(5'-nucleosyl)-tetraphosphatase [asymmetrical] (147 aa).

Ala2 carries the post-translational modification N-acetylalanine. The Nudix hydrolase domain occupies 2–139 (ALRACGLIIF…EMKAALQEGH (138 aa)). The Nudix box signature appears at 43 to 64 (GHVEPGESDLETALRETQEEAG).

Belongs to the Nudix hydrolase family. A divalent metal cation serves as cofactor.

It catalyses the reaction P(1),P(4)-bis(5'-guanosyl) tetraphosphate + H2O = GMP + GTP + 2 H(+). The enzyme catalyses a 5'-end CoA-ribonucleoside in mRNA + H2O = a 5'-end phospho-adenosine-phospho-ribonucleoside in mRNA + (R)-4'-phosphopantetheine + 2 H(+). It carries out the reaction a 5'-end FAD-phospho-ribonucleoside in mRNA + H2O = a 5'-end phospho-adenosine-phospho-ribonucleoside in mRNA + FMN + 2 H(+). Catalyzes the asymmetric hydrolysis of diadenosine 5',5'''-P1,P4-tetraphosphate (Ap4A) to yield AMP and ATP. Exhibits decapping activity towards FAD-capped RNAs and dpCoA-capped RNAs in vitro. This chain is Bis(5'-nucleosyl)-tetraphosphatase [asymmetrical] (NUDT2), found in Bos taurus (Bovine).